The following is a 432-amino-acid chain: 3-phosphoshikimate 1-carboxyvinyltransferase (432 aa).

3 residues coordinate 3-phosphoshikimate: K23, S24, and R28. K23 is a binding site for phosphoenolpyruvate. G95 and R123 together coordinate phosphoenolpyruvate. S166, Q168, D315, and K342 together coordinate 3-phosphoshikimate. A phosphoenolpyruvate-binding site is contributed by Q168. Catalysis depends on D315, which acts as the Proton acceptor. Phosphoenolpyruvate is bound by residues R346 and R390.

The protein belongs to the EPSP synthase family. In terms of assembly, monomer.

The protein resides in the cytoplasm. It carries out the reaction 3-phosphoshikimate + phosphoenolpyruvate = 5-O-(1-carboxyvinyl)-3-phosphoshikimate + phosphate. It participates in metabolic intermediate biosynthesis; chorismate biosynthesis; chorismate from D-erythrose 4-phosphate and phosphoenolpyruvate: step 6/7. Functionally, catalyzes the transfer of the enolpyruvyl moiety of phosphoenolpyruvate (PEP) to the 5-hydroxyl of shikimate-3-phosphate (S3P) to produce enolpyruvyl shikimate-3-phosphate and inorganic phosphate. This chain is 3-phosphoshikimate 1-carboxyvinyltransferase, found in Lactiplantibacillus plantarum (strain ATCC BAA-793 / NCIMB 8826 / WCFS1) (Lactobacillus plantarum).